The sequence spans 331 residues: PHD finger protein 11 (331 aa).

Residues 42 to 78 form a C2HC pre-PHD-type zinc finger; sequence KRTCALCPKDVEYNVLYFAQSENIAAHENCLLYSSGL. The PHD-type zinc-finger motif lies at 108 to 160; the sequence is LKCKFCHKRGATVGCDLKNCNKNYHFFCAKKDDAVPQSDGVRGIYKLLCQQHA.

In terms of assembly, interacts with BRCA1 and RELA. In terms of tissue distribution, highly expressed in T and B-cells, as well as natural killer and mature dendritic cells. Expressed at higher levels in Th1 as compared to Th2 cells. Expressed at low levels in all normal tissues tested, including lung, testis, small intestine, breast, liver and placenta.

Its subcellular location is the nucleus. Positive regulator of Th1-type cytokine gene expression. This chain is PHD finger protein 11 (PHF11), found in Homo sapiens (Human).